Consider the following 192-residue polypeptide: Peptidyl-tRNA hydrolase (192 aa).

Tyr18 lines the tRNA pocket. Catalysis depends on His23, which acts as the Proton acceptor. TRNA contacts are provided by Phe69, Asn71, and Asn117.

Belongs to the PTH family. Monomer.

Its subcellular location is the cytoplasm. It catalyses the reaction an N-acyl-L-alpha-aminoacyl-tRNA + H2O = an N-acyl-L-amino acid + a tRNA + H(+). Its function is as follows. Hydrolyzes ribosome-free peptidyl-tRNAs (with 1 or more amino acids incorporated), which drop off the ribosome during protein synthesis, or as a result of ribosome stalling. Catalyzes the release of premature peptidyl moieties from peptidyl-tRNA molecules trapped in stalled 50S ribosomal subunits, and thus maintains levels of free tRNAs and 50S ribosomes. The protein is Peptidyl-tRNA hydrolase of Neisseria meningitidis serogroup B (strain ATCC BAA-335 / MC58).